Reading from the N-terminus, the 103-residue chain is UPF0145 protein BCE_1095 (103 aa).

The protein belongs to the UPF0145 family.

The polypeptide is UPF0145 protein BCE_1095 (Bacillus cereus (strain ATCC 10987 / NRS 248)).